The chain runs to 79 residues: Sulfur carrier protein TusA (79 aa).

Catalysis depends on cysteine 17, which acts as the Cysteine persulfide intermediate.

Belongs to the sulfur carrier protein TusA family.

It localises to the cytoplasm. In terms of biological role, sulfur carrier protein which probably makes part of a sulfur-relay system. In Haemophilus influenzae (strain ATCC 51907 / DSM 11121 / KW20 / Rd), this protein is Sulfur carrier protein TusA.